A 569-amino-acid polypeptide reads, in one-letter code: MIMLKYNNKLLSDNERIKKNSNFLRGTIEKDLDNNLTGGFNVDNAQLIRFHGMYQQDDRDVRLERMNQKLEPLINMMLRCRLPGGVITSQQWLNIDNFSEEQTLYSSIRLTTRQTFQLHGILKPKLKGIHQLLNKLGLDSIATAGDVNRNVICTANPMESKVHYQIWELSKKISEHLLPKSKAYAEIWLNEKKIESIDSEPILSSVYLPRKFKIAIAVPPVNDVDVYANDLGLVAIKDNTGNLIGFNVLIGGGLAMTYGDKSTYPRMASEFGYINLQDILKIVESVITVQRDWGDRYNRRHAKTKYTLVKVGIDILKKEIENRSGLKFSPMYPYKFTERGDKFGWIRGINQDYWHLTLFIENGRVCNTSNILIKKGLSEIAKVHSGFFRITTNQNLIISEIHQDKKDIIEDLLKQYGLLGDFVTSQRKSSMACVAFPTCPLAMAEAERFLPAFVTKVEHVMSKYNLQRDAIILRVTGCPNGCARAMLAEIGLTGRGIGRYNLYLGGNKNGTRIPRLYKENITEDEILHVLDITIGDWAKNRKTQESYGDYVVRAGIVRAVINSEEDFYL.

Residues cysteine 433, cysteine 439, cysteine 478, and cysteine 482 each contribute to the [4Fe-4S] cluster site. Cysteine 482 serves as a coordination point for siroheme.

It belongs to the nitrite and sulfite reductase 4Fe-4S domain family. As to quaternary structure, alpha(8)-beta(8). The alpha component is a flavoprotein, the beta component is a hemoprotein. Requires siroheme as cofactor. It depends on [4Fe-4S] cluster as a cofactor.

The catalysed reaction is hydrogen sulfide + 3 NADP(+) + 3 H2O = sulfite + 3 NADPH + 4 H(+). Its pathway is sulfur metabolism; hydrogen sulfide biosynthesis; hydrogen sulfide from sulfite (NADPH route): step 1/1. Functionally, component of the sulfite reductase complex that catalyzes the 6-electron reduction of sulfite to sulfide. This is one of several activities required for the biosynthesis of L-cysteine from sulfate. The polypeptide is Sulfite reductase [NADPH] hemoprotein beta-component (Blochmanniella floridana).